Here is a 185-residue protein sequence, read N- to C-terminus: Ribosome-recycling factor (185 aa).

Belongs to the RRF family.

The protein resides in the cytoplasm. Functionally, responsible for the release of ribosomes from messenger RNA at the termination of protein biosynthesis. May increase the efficiency of translation by recycling ribosomes from one round of translation to another. The chain is Ribosome-recycling factor from Haemophilus ducreyi (strain 35000HP / ATCC 700724).